The primary structure comprises 388 residues: uncharacterized protein (388 aa).

11 helical membrane passes run 18-38 (AAMFLNYLTIGIPLVMLPLYV), 42-62 (LHLSDLLIGIAVGSQFIATLL), 89-111 (ASGLLMLVSLIAHPVPLLAWAIL), 116-136 (VLLGIGESFILTGNLTWGMWL), 145-165 (VISWNGMATYGALAIGAPLGL), 171-191 (AGLALPALLVVLLPIIASGVI), 219-239 (TGLVLQGIGFATLSAFTALWF), 248-268 (GFAMTLFGIAFIAVRFFCAKF), 287-307 (TGLAVMWAAPSAGAALIGAAI), 341-361 (AFQDLAYGFTGPIAGLLTPFI), and 365-385 (QVFLLAAACALLGAAVVHLLL).

The protein belongs to the major facilitator superfamily. YfcJ family.

Its subcellular location is the cell inner membrane. This is an uncharacterized protein from Salmonella typhimurium (strain LT2 / SGSC1412 / ATCC 700720).